The sequence spans 369 residues: MTAPVKLHLRAETKPLEHRSALTPTTTRKLLDAGFEVFVEKSPLRIFDDQEFVDVGATLVEEGSWVSAPEDRMIIGLKELPEESFPLSHEHIQFAHCYKDQGGWKDVLSRFPAGNGTLYDLEFLEDDNGRRVAAFGFHAGFAGAAIGVETWAFQQTHPDSENLPGVSAYPNETELVDKIKKDLAAAVEKGSKLPTVLVIGALGRCGSGAIDLARKVGIPEENIIRWDMNETKKGGPFQEIADADIFINCIYLSQPIPPFINYDLLNKETRKLSVIVDVSADTTNPHNPVPVYTIATTFDHPTVPVETTAGPKLSVCSIDHLPSLLPREASEAFSEALLPSLLQLPQRDTAPVWTRAKALFDKHVLRIGE.

Residues Arg-19 and Lys-78 each coordinate L-saccharopine. Catalysis depends on Lys-78, which acts as the Proton acceptor. His-96 serves as the catalytic Proton donor. Gln-101 is an L-saccharopine binding site. Residue Arg-130 participates in NAD(+) binding. L-saccharopine is bound by residues Arg-131 and Phe-135. NAD(+) contacts are provided by residues 203–204, Asp-227, Thr-231, Tyr-251, and Val-278; that span reads GR. Residues Cys-205 and Cys-249 are joined by a disulfide bond. Position 279–281 (279–281) interacts with L-saccharopine; the sequence is SAD. Position 318 to 321 (318 to 321) interacts with NAD(+); sequence IDHL.

It belongs to the AlaDH/PNT family. Monomer.

The catalysed reaction is L-saccharopine + NAD(+) + H2O = L-lysine + 2-oxoglutarate + NADH + H(+). It functions in the pathway amino-acid biosynthesis; L-lysine biosynthesis via AAA pathway; L-lysine from L-alpha-aminoadipate (fungal route): step 3/3. In terms of biological role, catalyzes the NAD(+)-dependent cleavage of saccharopine to L-lysine and 2-oxoglutarate, the final step in the alpha-aminoadipate (AAA) pathway for lysin biosynthesis. The polypeptide is Saccharopine dehydrogenase [NAD(+), L-lysine-forming] (Yarrowia lipolytica (strain CLIB 122 / E 150) (Yeast)).